The chain runs to 115 residues: Large ribosomal subunit protein bL19 (115 aa).

This sequence belongs to the bacterial ribosomal protein bL19 family.

Its function is as follows. This protein is located at the 30S-50S ribosomal subunit interface and may play a role in the structure and function of the aminoacyl-tRNA binding site. In Citrobacter koseri (strain ATCC BAA-895 / CDC 4225-83 / SGSC4696), this protein is Large ribosomal subunit protein bL19.